The sequence spans 185 residues: Pro-adrenomedullin (185 aa).

The N-terminal stretch at 1–21 (MKLVSIALMLLGSLAVLGADT) is a signal peptide. The residue at position 41 (Arg41) is an Arginine amide. A propeptide spanning residues 45-91 (ELQASSSYPTGLVDEKTVPTQTLGLQDKQSTSSTPQASTQSTAHIRV) is cleaved from the precursor. Residues 68–89 (GLQDKQSTSSTPQASTQSTAHI) are disordered. A compositionally biased stretch (low complexity) spans 73 to 87 (QSTSSTPQASTQSTA). Cys107 and Cys112 form a disulfide bridge. The tract at residues 125–185 (TDKDKDGMAP…HQDISRVSRL (61 aa)) is disordered. Tyr143 is subject to Tyrosine amide. The propeptide at 150–185 (SLPEVLRARTVESSQEQTHSAPASPAHQDISRVSRL) is preproAM C-terminal fragment. Positions 160–170 (VESSQEQTHSA) are enriched in polar residues.

This sequence belongs to the adrenomedullin family. Expressed in adrenal glands, lung, kidney, heart, spleen, duodenum and submandibular glands.

Its subcellular location is the secreted. Functionally, adrenomedullin/ADM and proadrenomedullin N-20 terminal peptide/PAMP are peptide hormones that act as potent hypotensive and vasodilatator agents. Numerous actions have been reported most related to the physiologic control of fluid and electrolyte homeostasis. Its function is as follows. ADM function is mediated by the CALCRL-RAMP2 and CALCRL-RAMP3 receptor complexes with ADM showing the highest potency for the CALCRL-RAMP2 complex. In Rattus norvegicus (Rat), this protein is Pro-adrenomedullin.